The primary structure comprises 121 residues: Putative RNase MJ1216 (121 aa).

Residues R76 and H81 contribute to the active site. Residues 76 to 83 (RDKLIHQY) carry the RX(4)HXY motif motif. O-di-AMP-tyrosine is present on Y83.

Belongs to the HepT RNase toxin family. In terms of assembly, homodimer, probably forms a complex with antitoxin MJ1215 or MJ1217. In terms of processing, modified by antitoxin MJ1215 or MJ1217; probably at least 2 successive AMPylation events occur on Tyr-83.

Its function is as follows. Probable toxic component of a putative type VII toxin-antitoxin (TA) system, probably an RNase. Probably neutralized by antitoxin MJ1215 or MJ1217. Neutralization may be due to AMPylation by antitoxin. This is Putative RNase MJ1216 from Methanocaldococcus jannaschii (strain ATCC 43067 / DSM 2661 / JAL-1 / JCM 10045 / NBRC 100440) (Methanococcus jannaschii).